A 118-amino-acid polypeptide reads, in one-letter code: Basic phospholipase A2 homolog 1 (118 aa).

7 cysteine pairs are disulfide-bonded: cysteine 11-cysteine 71, cysteine 27-cysteine 117, cysteine 29-cysteine 45, cysteine 44-cysteine 98, cysteine 51-cysteine 91, cysteine 60-cysteine 84, and cysteine 78-cysteine 89. The interval 106 to 118 (NKNFNIDTKKRCK) is important for membrane-damaging activities in eukaryotes and bacteria; heparin-binding.

This sequence belongs to the phospholipase A2 family. Group I subfamily. D49 sub-subfamily. As to expression, expressed by the venom gland.

It localises to the secreted. In Laticauda colubrina (Yellow-lipped sea krait), this protein is Basic phospholipase A2 homolog 1.